We begin with the raw amino-acid sequence, 602 residues long: Pentatricopeptide repeat-containing protein At3g04760, chloroplastic (602 aa).

A chloroplast-targeting transit peptide spans 1 to 78 (MTPLSSELVG…TDATLPTERR (78 aa)). A compositionally biased stretch (polar residues) spans 42–64 (FSNSNPNNDNGRSFSSSGARNLQ). Residues 42–85 (FSNSNPNNDNGRSFSSSGARNLQTTTTTDATLPTERRQQHSQSL) are disordered. Residues 65–74 (TTTTTDATLP) are compositionally biased toward low complexity. PPR repeat units lie at residues 88–122 (RDTQMLKIFHRSCRSGNYIESLHLLETMVRKGYNP), 123–153 (DVILCTKLIKGFFTLRNIPKAVRVMEILEKF), 157–191 (DVFAYNALINGFCKMNRIDDATRVLDRMRSKDFSP), 192–226 (DTVTYNIMIGSLCSRGKLDLALKVLNQLLSDNCQP), 227–261 (TVITYTILIEATMLEGGVDEALKLMDEMLSRGLKP), 262–296 (DMFTYNTIIRGMCKEGMVDRAFEMVRNLELKGCEP), 297–331 (DVISYNILLRALLNQGKWEEGEKLMTKMFSEKCDP), 332–366 (NVVTYSILITTLCRDGKIEEAMNLLKLMKEKGLTP), 367–401 (DAYSYDPLIAAFCREGRLDVAIEFLETMISDGCLP), 402–436 (DIVNYNTVLATLCKNGKADQALEIFGKLGEVGCSP), 437–471 (NSSSYNTMFSALWSSGDKIRALHMILEMMSNGIDP), 472–506 (DEITYNSMISCLCREGMVDEAFELLVDMRSCEFHP), 507–541 (SVVTYNIVLLGFCKAHRIEDAINVLESMVGNGCRP), and 542–576 (NETTYTVLIEGIGFAGYRAEAMELANDLVRIDAIS).

Belongs to the PPR family. P subfamily.

Its subcellular location is the plastid. It localises to the chloroplast. The polypeptide is Pentatricopeptide repeat-containing protein At3g04760, chloroplastic (Arabidopsis thaliana (Mouse-ear cress)).